Here is a 327-residue protein sequence, read N- to C-terminus: MLTYPPVKKVSVVIPVYNEQDSLPELLRRTDAACATLGRQYEILLIDDGSSDDSARMLTEAAEAEGSHVVAVLLNRNYGQHSAIMAGFSHVTGDLIITLDADLQNPPEEIPRLVAKADEGYDVVGTVRQNRQDSIFRKTASKMINRLIQRTTGKAMGDYGCMLRAYRRHIIDAMLNCHERSTFIPILANTFARRAVEIPVMHAEREFGDSKYSFMRLINLMYDLVTCLTTTPLRLLSIFGSVIALLGFAFGLLLVVLRLAFGPQWAAEGVFMLFAVLFMFIGAQFVGMGLLGEYIGRIYNDVRARPRYFIQRVVRQPETASKEEDRS.

2 consecutive transmembrane segments (helical) span residues 236 to 256 and 270 to 290; these read LSIF…LLVV and VFML…GMGL.

This sequence belongs to the glycosyltransferase 2 family.

The protein localises to the cell inner membrane. The enzyme catalyses UDP-4-deoxy-4-formamido-beta-L-arabinose + di-trans,octa-cis-undecaprenyl phosphate = 4-deoxy-4-formamido-alpha-L-arabinopyranosyl di-trans,octa-cis-undecaprenyl phosphate + UDP. It functions in the pathway glycolipid biosynthesis; 4-amino-4-deoxy-alpha-L-arabinose undecaprenyl phosphate biosynthesis; 4-amino-4-deoxy-alpha-L-arabinose undecaprenyl phosphate from UDP-4-deoxy-4-formamido-beta-L-arabinose and undecaprenyl phosphate: step 1/2. Its pathway is bacterial outer membrane biogenesis; lipopolysaccharide biosynthesis. Its function is as follows. Catalyzes the transfer of 4-deoxy-4-formamido-L-arabinose from UDP to undecaprenyl phosphate. The modified arabinose is attached to lipid A and is required for resistance to polymyxin and cationic antimicrobial peptides. The protein is Undecaprenyl-phosphate 4-deoxy-4-formamido-L-arabinose transferase of Klebsiella pneumoniae subsp. pneumoniae (strain ATCC 700721 / MGH 78578).